The primary structure comprises 361 residues: Phospho-N-acetylmuramoyl-pentapeptide-transferase (361 aa).

The next 10 membrane-spanning stretches (helical) occupy residues 25-45 (RAVLASLTALGIGLALGPWVI), 73-93 (TMGGTLILLSIGITTLLWADL), 97-117 (YVWLLLAVLFGTGAIGFYDDW), 134-154 (MFWQSAIAIFAGIYLISTASL), 168-188 (VIYPFGVVGFCILTYFVIVGT), 200-220 (GLAAMPVVMVSAALAVFAYVA), 240-260 (VAVFCAAMAGACLAFLWFNAY), 264-284 (VFMGDVGALALGAALGTVAVI), 289-309 (IVLFVMGGLFVMEALSVMIQV), and 338-358 (QVVVRFWIITMMLVLAGLSTL).

The protein belongs to the glycosyltransferase 4 family. MraY subfamily. Mg(2+) serves as cofactor.

The protein resides in the cell inner membrane. It catalyses the reaction UDP-N-acetyl-alpha-D-muramoyl-L-alanyl-gamma-D-glutamyl-meso-2,6-diaminopimeloyl-D-alanyl-D-alanine + di-trans,octa-cis-undecaprenyl phosphate = di-trans,octa-cis-undecaprenyl diphospho-N-acetyl-alpha-D-muramoyl-L-alanyl-D-glutamyl-meso-2,6-diaminopimeloyl-D-alanyl-D-alanine + UMP. Its pathway is cell wall biogenesis; peptidoglycan biosynthesis. Its function is as follows. Catalyzes the initial step of the lipid cycle reactions in the biosynthesis of the cell wall peptidoglycan: transfers peptidoglycan precursor phospho-MurNAc-pentapeptide from UDP-MurNAc-pentapeptide onto the lipid carrier undecaprenyl phosphate, yielding undecaprenyl-pyrophosphoryl-MurNAc-pentapeptide, known as lipid I. This Laribacter hongkongensis (strain HLHK9) protein is Phospho-N-acetylmuramoyl-pentapeptide-transferase.